Here is a 131-residue protein sequence, read N- to C-terminus: MKLQQNCDLELRLFPTSYDSDSSDTTSVVESTSSGNPQPNEESQRITIFYNGKMCFSSDVTHLQARSIISIASREMKTKSSSNGSDPPNKSTSFHHNQLPNPKASMKKSLQSFLQKRKIRIQATSPYHSRR.

The EAR motif lies at 9–13 (LELRL). Disordered stretches follow at residues 14-44 (FPTS…EESQ) and 74-131 (REMK…HSRR). Residues 16–34 (TSYDSDSSDTTSVVESTSS) are compositionally biased toward low complexity. Positions 39-74 (PNEESQRITIFYNGKMCFSSDVTHLQARSIISIASR) constitute a Tify domain. Polar residues predominate over residues 79–100 (KSSSNGSDPPNKSTSFHHNQLP). The Jas motif lies at 105 to 127 (SMKKSLQSFLQKRKIRIQATSPY). Residues 106 to 113 (MKKSLQSF) carry the Nuclear localization signal motif. The span at 122–131 (QATSPYHSRR) shows a compositional bias: polar residues.

This sequence belongs to the TIFY/JAZ family. In terms of assembly, interacts with TPL and weakly with COI1, but not with AFPH2/NINJA. Interacts with MYC2, MYB21, MYB24, TIFY10A/JAZ1, TIFY10B/JAZ2, TIFY6B/JAZ3, TIFY6A/JAZ4, TIFY11A/JAZ5, TIFY11B/JAZ6, TIFY7/JAZ9, TIFY9/JAZ10 and TIFY3B/JAZ12. Interacts with RHD6 and RSL1. (Microbial infection) Interacts with the pathogenic Pseudomonas syringae HopZ1a protein. Post-translationally, (Microbial infection) Acetylated by Pseudomonas syringae HopZ1a. In terms of processing, ubiquitinated.

It localises to the nucleus. Repressor of jasmonate responses. Unable to associate strongly with COI1 in the presence of jasmonoyl-isoleucine (JA-Ile) and is therefore more resistant to JA-mediated-degradation than other TIFY/JAZ proteins. Repress gene expression through direct recruitment of the corepressor TOPLESS to cognate transcription factors. Interacts with and suppresses RHD6 and RSL1 transcription factor activities to negatively regulate jasmonate-stimulated root hair development. The sequence is that of Protein TIFY 5A from Arabidopsis thaliana (Mouse-ear cress).